A 250-amino-acid polypeptide reads, in one-letter code: Enoyl-[acyl-carrier-protein] reductase [NADPH] FabL (250 aa).

NADP(+) contacts are provided by residues 13–16 (SRGV), 36–38 (ARS), 62–63 (NV), and N89. Residues Y151 and K158 each act as proton acceptor in the active site. Residues K158 and 187-189 (IDT) each bind NADP(+).

It belongs to the short-chain dehydrogenases/reductases (SDR) family. As to quaternary structure, homotetramer.

The enzyme catalyses a 2,3-saturated acyl-[ACP] + NADP(+) = a (2E)-enoyl-[ACP] + NADPH + H(+). It carries out the reaction (2E)-butenoyl-[ACP] + NADPH + H(+) = butanoyl-[ACP] + NADP(+). The protein operates within lipid metabolism; fatty acid biosynthesis. Its activity is regulated as follows. Inhibited by triclosan. Its function is as follows. Catalyzes the reduction of a carbon-carbon double bond in an enoyl moiety that is covalently linked to an acyl carrier protein (ACP). It confers resistance to triclosan. The sequence is that of Enoyl-[acyl-carrier-protein] reductase [NADPH] FabL (fabL) from Bacillus subtilis (strain 168).